Here is a 282-residue protein sequence, read N- to C-terminus: Tryptophan 2,3-dioxygenase (282 aa).

Residues 51–55 (FIIQH), Tyr113, and Arg117 each bind substrate. His240 contributes to the heme binding site. Position 254 (Thr254) interacts with substrate.

Belongs to the tryptophan 2,3-dioxygenase family. In terms of assembly, homotetramer. The cofactor is heme.

The enzyme catalyses L-tryptophan + O2 = N-formyl-L-kynurenine. It functions in the pathway amino-acid degradation; L-tryptophan degradation via kynurenine pathway; L-kynurenine from L-tryptophan: step 1/2. Its function is as follows. Heme-dependent dioxygenase that catalyzes the oxidative cleavage of the L-tryptophan (L-Trp) pyrrole ring and converts L-tryptophan to N-formyl-L-kynurenine. Catalyzes the oxidative cleavage of the indole moiety. This chain is Tryptophan 2,3-dioxygenase, found in Polaromonas naphthalenivorans (strain CJ2).